A 132-amino-acid polypeptide reads, in one-letter code: D-ribose pyranase (132 aa).

H20 acts as the Proton donor in catalysis. Substrate is bound by residues D28, H99, and 121-123 (YSN).

It belongs to the RbsD / FucU family. RbsD subfamily. Homodecamer.

The protein localises to the cytoplasm. It catalyses the reaction beta-D-ribopyranose = beta-D-ribofuranose. Its pathway is carbohydrate metabolism; D-ribose degradation; D-ribose 5-phosphate from beta-D-ribopyranose: step 1/2. Catalyzes the interconversion of beta-pyran and beta-furan forms of D-ribose. This Lactococcus lactis subsp. cremoris (strain SK11) protein is D-ribose pyranase.